Here is a 262-residue protein sequence, read N- to C-terminus: MLIFDSGVGGLSILKNIKKILPNIHYIYMLDNESFPYGNKTEFFIIQRSIKIIHTIKKIYPINIVVIACNTISTVALSILREKFDIPIFGIFPHIKAAEKITKNKIIGLIATKATINSSYTQKIIYEYSCSNTIKIIGTNKLAVIAEKKIRGVAVSQKKLKNIFRPWINLPTCPDTIILGCTHFSLLEKEIKNILYKTRSVYFIDSIKKVIFQIKSCLKTSNVNQKIKKNIFLYSKNNNNLKKLLSFLKQYKFTVIKHINLN.

Substrate contacts are provided by residues 5–6 (DS) and 37–38 (YG). The Proton donor/acceptor role is filled by C69. 70-71 (NT) lines the substrate pocket. The active-site Proton donor/acceptor is C181. Residue 182 to 183 (TH) participates in substrate binding.

The protein belongs to the aspartate/glutamate racemases family.

The enzyme catalyses L-glutamate = D-glutamate. It functions in the pathway cell wall biogenesis; peptidoglycan biosynthesis. Provides the (R)-glutamate required for cell wall biosynthesis. The protein is Glutamate racemase of Buchnera aphidicola subsp. Acyrthosiphon pisum (strain Tuc7).